A 291-amino-acid chain; its full sequence is Diaminopimelate epimerase (291 aa).

Asn13, Gln46, and Asn66 together coordinate substrate. The Proton donor role is filled by Cys75. Residues 76-77 (GN), Asn156, Asn189, and 207-208 (ER) each bind substrate. Cys216 acts as the Proton acceptor in catalysis. Residue 217–218 (GS) participates in substrate binding.

It belongs to the diaminopimelate epimerase family. In terms of assembly, homodimer.

The protein resides in the cytoplasm. It carries out the reaction (2S,6S)-2,6-diaminopimelate = meso-2,6-diaminopimelate. Its pathway is amino-acid biosynthesis; L-lysine biosynthesis via DAP pathway; DL-2,6-diaminopimelate from LL-2,6-diaminopimelate: step 1/1. Catalyzes the stereoinversion of LL-2,6-diaminopimelate (L,L-DAP) to meso-diaminopimelate (meso-DAP), a precursor of L-lysine and an essential component of the bacterial peptidoglycan. This chain is Diaminopimelate epimerase, found in Rhodospirillum centenum (strain ATCC 51521 / SW).